The chain runs to 388 residues: 4-hydroxy-3-methylbut-2-en-1-yl diphosphate synthase (flavodoxin) (388 aa).

[4Fe-4S] cluster contacts are provided by cysteine 281, cysteine 284, cysteine 316, and glutamate 323.

This sequence belongs to the IspG family. [4Fe-4S] cluster serves as cofactor.

It catalyses the reaction (2E)-4-hydroxy-3-methylbut-2-enyl diphosphate + oxidized [flavodoxin] + H2O + 2 H(+) = 2-C-methyl-D-erythritol 2,4-cyclic diphosphate + reduced [flavodoxin]. It participates in isoprenoid biosynthesis; isopentenyl diphosphate biosynthesis via DXP pathway; isopentenyl diphosphate from 1-deoxy-D-xylulose 5-phosphate: step 5/6. Converts 2C-methyl-D-erythritol 2,4-cyclodiphosphate (ME-2,4cPP) into 1-hydroxy-2-methyl-2-(E)-butenyl 4-diphosphate. This Arthrobacter sp. (strain FB24) protein is 4-hydroxy-3-methylbut-2-en-1-yl diphosphate synthase (flavodoxin).